The following is a 1528-amino-acid chain: Intraflagellar transport protein 121 (1528 aa).

WD repeat units follow at residues 123 to 170 (SNRA…GSAP), 244 to 285 (SSMP…SSVS), 619 to 667 (PSLT…SEFL), and 759 to 798 (PELI…REDS). The tract at residues 914 to 933 (DSGLDVTASNSSQPSTQTSQ) is disordered. Positions 920 to 933 (TASNSSQPSTQTSQ) are enriched in low complexity.

It is found in the cell projection. Its subcellular location is the cilium. It localises to the flagellum. The protein localises to the cytoplasm. The protein resides in the cytoskeleton. It is found in the flagellum axoneme. Its subcellular location is the flagellum basal body. Its function is as follows. Component of the intraflagellar transport complex A (IFT-A) involved in flagellar assembly. The protein is Intraflagellar transport protein 121 of Giardia intestinalis (strain ATCC 50803 / WB clone C6) (Giardia lamblia).